Reading from the N-terminus, the 317-residue chain is Gamma-glutamyl hydrolase (317 aa).

The signal sequence occupies residues 1 to 24; that stretch reads MANLGYLLCLLGLLLCGLSSPGMS. Residues 25-317 enclose the Gamma-glutamyl hydrolase domain; the sequence is RPYNHGSERP…SSFQQAYMFD (293 aa). A glycan (N-linked (GlcNAc...) (high mannose) asparagine) is linked at Asn-100. Cys-133 functions as the Nucleophile in the catalytic mechanism. N-linked (GlcNAc...) (high mannose) asparagine glycans are attached at residues Asn-162 and Asn-188. The N-linked (GlcNAc...) asparagine glycan is linked to Asn-202. The active-site Proton donor is the His-243. N-linked (GlcNAc...) asparagine glycosylation is present at Asn-306.

It belongs to the peptidase C26 family. Homodimer. In terms of tissue distribution, isoform I (more expressed than isoform II in all tissues) is highly expressed in salivary gland, followed by kidney, liver, lung, stomach and uterus, and weakly expressed in small intestine, brain and fetal liver. Also expressed at a lower level in thymus, spleen and skeletal muscle. Also expressed in tumors.

The protein localises to the secreted. Its subcellular location is the extracellular space. It localises to the lysosome. It is found in the melanosome. The enzyme catalyses (6S)-5,6,7,8-tetrahydrofolyl-(gamma-L-Glu)(n) + (n-1) H2O = (6S)-5,6,7,8-tetrahydrofolate + (n-1) L-glutamate. Its function is as follows. Hydrolyzes the polyglutamate sidechains of pteroylpolyglutamates. Progressively removes gamma-glutamyl residues from pteroylpoly-gamma-glutamate to yield pteroyl-alpha-glutamate (folic acid) and free glutamate. May play an important role in the bioavailability of dietary pteroylpolyglutamates and in the metabolism of pteroylpolyglutamates and antifolates. This chain is Gamma-glutamyl hydrolase (Ggh), found in Mus musculus (Mouse).